Reading from the N-terminus, the 235-residue chain is Eukaryotic translation initiation factor 4E-1 (235 aa).

Basic and acidic residues predominate over residues 1–16 (MAVEDTPKSVVTEEAK). Residues 1–59 (MAVEDTPKSVVTEEAKPNSIENPIDRYHEEGDDAEEGEIAGGEGDGNVDESSKSGVPES) form a disordered region. 2 EIF4G-binding regions span residues 60-63 (HPLE) and 70-106 (FDNP…NNMK). Residues 78–83 (KQTSWG), Lys110, and 128–129 (WE) each bind mRNA. Cys133 and Cys171 form a disulfide bridge. Positions 154–163 (YTLLALIGEQ) are EIF4G-binding. MRNA contacts are provided by residues 178–183 (RGKQER) and 223–227 (KKLDR).

It belongs to the eukaryotic initiation factor 4E family. In terms of assembly, EIF4F is a multi-subunit complex, the composition of which varies with external and internal environmental conditions. It is composed of at least EIF4A, EIF4E and EIF4G. EIF4E is also known to interact with other partners. In higher plants two isoforms of EIF4F have been identified, named isoform EIF4F and isoform EIF(iso)4F. Isoform EIF4F has subunits p220 and p26, whereas isoform EIF(iso)4F has subunits p82 and p28. Interacts directly with EXA1. As to quaternary structure, (Microbial infection) Interacts with viral genome-linked protein (VPg); this interaction is possible in susceptible hosts but impaired in resistant plants. According to the redox status, the Cys-133-Cys-171 disulfide bridge may have a role in regulating protein function by affecting its ability to bind capped mRNA. As to expression, expressed in all tissues except in the cells of the specialization zone of the roots.

The protein resides in the nucleus. It localises to the cytoplasm. Functionally, component of the protein complex eIF4F, which is involved in the recognition of the mRNA cap, ATP-dependent unwinding of 5'-terminal secondary structure and recruitment of mRNA to the ribosome. Recognizes and binds the 7-methylguanosine-containing mRNA cap during an early step in the initiation of protein synthesis and facilitates ribosome binding by inducing the unwinding of the mRNAs secondary structures. Key component of recessive resistance to potyviruses. In terms of biological role, (Microbial infection) Susceptibility host factor required for viral infection by recruiting viral RNAs to the host ribosomal complex via an interaction with viral genome-linked protein (VPg). This Arabidopsis thaliana (Mouse-ear cress) protein is Eukaryotic translation initiation factor 4E-1.